Here is a 235-residue protein sequence, read N- to C-terminus: Peptidase E (235 aa).

Residues Ser122, Asp137, and His159 each act as charge relay system in the active site.

The protein belongs to the peptidase S51 family.

The protein resides in the cytoplasm. It catalyses the reaction Dipeptidase E catalyzes the hydrolysis of dipeptides Asp-|-Xaa. It does not act on peptides with N-terminal Glu, Asn or Gln, nor does it cleave isoaspartyl peptides.. Hydrolyzes dipeptides containing N-terminal aspartate residues. May play a role in allowing the cell to use peptide aspartate to spare carbon otherwise required for the synthesis of the aspartate family of amino acids. The polypeptide is Peptidase E (Shewanella denitrificans (strain OS217 / ATCC BAA-1090 / DSM 15013)).